We begin with the raw amino-acid sequence, 98 residues long: Small ribosomal subunit protein bS6 (98 aa).

It belongs to the bacterial ribosomal protein bS6 family.

In terms of biological role, binds together with bS18 to 16S ribosomal RNA. This is Small ribosomal subunit protein bS6 from Lactobacillus johnsonii (strain CNCM I-12250 / La1 / NCC 533).